The sequence spans 627 residues: 5-aminolevulinate synthase, non-specific, mitochondrial (627 aa).

Residues 1–58 (MDVIVRRCPFLARVPQAFFQQSKKSLAVYAQRCPFMMELASKPMAPSLARALCSSSSS) constitute a mitochondrion transit peptide. Residues Arg204, Ser321, and Lys340 each coordinate substrate. Pyridoxal 5'-phosphate is bound by residues Ser373, His401, and Thr429. Lys432 is a catalytic residue. At Lys432 the chain carries N6-(pyridoxal phosphate)lysine. Pyridoxal 5'-phosphate contacts are provided by Thr461 and Thr462. A substrate-binding site is contributed by Thr549.

The protein belongs to the class-II pyridoxal-phosphate-dependent aminotransferase family. As to quaternary structure, homodimer. It depends on pyridoxal 5'-phosphate as a cofactor.

It is found in the mitochondrion inner membrane. The catalysed reaction is succinyl-CoA + glycine + H(+) = 5-aminolevulinate + CO2 + CoA. The protein operates within porphyrin-containing compound metabolism; protoporphyrin-IX biosynthesis; 5-aminolevulinate from glycine: step 1/1. Catalyzes the pyridoxal 5'-phosphate (PLP)-dependent condensation of succinyl-CoA and glycine to form aminolevulinic acid (ALA), with CoA and CO2 as by-products. The sequence is that of 5-aminolevulinate synthase, non-specific, mitochondrial (alas1) from Opsanus tau (Oyster toadfish).